A 401-amino-acid chain; its full sequence is MKYDRILIRYGEMTTKGKNRNIFVRRLKNNIARKLQAFPRIKIEYMRDRMYILLNGEPHEPIIDKLKTVFGIHSFSLAMKCENDLAAIKETALAAVRQLPYKGKTFKVSARRVDKQFPYRSDELNHEVGAHILRQTEDLTVNVRQPDIDVRIEVRQDGTYVTCHDIFGAGGLPVGTSGKAMLMLSGGIDSPVAGYLAMKRGLEIEAVHFFSPPFTSERAKQKVIDLVRKLTAYGGKIKLHIVPFTEVQQAIYQGVPNEYSLISTRRAMLKITDALRRRQRGLAIVTGESLGQVASQTLESMYVINEVTNTPVLRPLISMDKMEIIEIAKQIDTHDISILPYEDCCTIFTPRAPKTKPKKEKVLQHESQLDLAPLLEKAINETETIVIDEEAGQADEFTALF.

Residues 60 to 165 form the THUMP domain; sequence EPIIDKLKTV…QDGTYVTCHD (106 aa). Residues 183-184, 208-209, Arg265, Gly287, and Gln296 each bind ATP; these read ML and HF.

It belongs to the ThiI family.

Its subcellular location is the cytoplasm. The enzyme catalyses [ThiI sulfur-carrier protein]-S-sulfanyl-L-cysteine + a uridine in tRNA + 2 reduced [2Fe-2S]-[ferredoxin] + ATP + H(+) = [ThiI sulfur-carrier protein]-L-cysteine + a 4-thiouridine in tRNA + 2 oxidized [2Fe-2S]-[ferredoxin] + AMP + diphosphate. The catalysed reaction is [ThiS sulfur-carrier protein]-C-terminal Gly-Gly-AMP + S-sulfanyl-L-cysteinyl-[cysteine desulfurase] + AH2 = [ThiS sulfur-carrier protein]-C-terminal-Gly-aminoethanethioate + L-cysteinyl-[cysteine desulfurase] + A + AMP + 2 H(+). It functions in the pathway cofactor biosynthesis; thiamine diphosphate biosynthesis. In terms of biological role, catalyzes the ATP-dependent transfer of a sulfur to tRNA to produce 4-thiouridine in position 8 of tRNAs, which functions as a near-UV photosensor. Also catalyzes the transfer of sulfur to the sulfur carrier protein ThiS, forming ThiS-thiocarboxylate. This is a step in the synthesis of thiazole, in the thiamine biosynthesis pathway. The sulfur is donated as persulfide by IscS. The protein is Probable tRNA sulfurtransferase of Geobacillus thermodenitrificans (strain NG80-2).